Here is a 577-residue protein sequence, read N- to C-terminus: BICD family-like cargo adapter 1 (577 aa).

The tract at residues leucine 63–proline 100 is disordered. Basic and acidic residues predominate over residues arginine 69 to alanine 79. Residues alanine 116–glycine 120 carry the CC1 box motif. Residues lysine 121–arginine 379 adopt a coiled-coil conformation. Residues aspartate 389–alanine 415 are disordered. Over residues serine 390–serine 399 the composition is skewed to low complexity. The stretch at leucine 443–arginine 528 forms a coiled coil.

The protein belongs to the BICDR family. Part of a tripartite complex with dynein and dynactin, acts an adapter linking the dynein motor complex and dynactin. Interacts with KIF1C. Interacts with RAB6A and RAB6B; interaction is specific to Rab6. As to expression, highly expressed during early embryonic development. Predominantly expressed in kidney, undifferentiated neural tissue and developing eye.

The protein resides in the cytoplasm. The protein localises to the cytoskeleton. It localises to the microtubule organizing center. Its subcellular location is the centrosome. Its function is as follows. Acts as an adapter protein linking the dynein motor complex to various cargos and converts dynein from a non-processive to a highly processive motor in the presence of dynactin. Facilitates the interaction between dynein and dynactin and activates dynein processivity (the ability to move along a microtubule for a long distance without falling off the track). Predominantly recruits 2 dyneins, which increases both the force and speed of the microtubule motor. Component of secretory vesicle machinery in developing neurons that acts as a regulator of neurite outgrowth. Regulates the secretory vesicle transport by controlling the accumulation of Rab6-containing secretory vesicles in the pericentrosomal region restricting anterograde secretory transport during the early phase of neuronal differentiation, thereby inhibiting neuritogenesis. In Mus musculus (Mouse), this protein is BICD family-like cargo adapter 1 (Bicdl1).